The following is a 113-amino-acid chain: MFPYKIVEDVVILMPNKELNIENAHLFKKWVFDEFLNKGYNKILLVLSDVESIDSFSLGVIVNILKSVSSVGGFFALVSPNERVERVLSITNLDRIVKIYDTISEALEEVQGR.

The STAS domain maps to 1–110; sequence MFPYKIVEDV…DTISEALEEV (110 aa). S55 carries the phosphoserine modification.

It belongs to the anti-sigma-factor antagonist family. Phosphorylated on a serine residue.

In the phosphorylated form it could act as an anti-anti-sigma factor that counteracts an anti-sigma factor and thus releases a sigma factor from inhibition. The protein is Putative anti-sigma factor antagonist TM1081 homolog of Thermotoga neapolitana.